The sequence spans 173 residues: MPRSQNKDNFLDKAFTKMAEGIVKVMPIDSKEKEAYLYYRKGLAAQNDGDYSEALEYYEESLKLEDNQVDRGETLKNMAIIYMSNGDEERAINTYKKALGQNPKQPSCLKNMGLIYEKRGRMAQRNGNQDECDIWFDQAAEVWSKAVRLYPGGYLDIENWLKTTGRGNVDVYL.

TPR repeat units follow at residues 35 to 68 (AYLY…EDNQ), 72 to 105 (GETL…NPKQ), and 120 to 153 (GRMA…YPGG).

This sequence belongs to the Ycf3 family.

The protein localises to the cellular thylakoid membrane. Its function is as follows. Essential for the assembly of the photosystem I (PSI) complex. May act as a chaperone-like factor to guide the assembly of the PSI subunits. This is Photosystem I assembly protein Ycf3 from Prochlorococcus marinus (strain NATL2A).